The chain runs to 172 residues: Small ribosomal subunit protein uS5 (172 aa).

Positions 13–76 constitute an S5 DRBM domain; that stretch reads LIEKMVAVNR…DQARRSMIKV (64 aa).

It belongs to the universal ribosomal protein uS5 family. As to quaternary structure, part of the 30S ribosomal subunit. Contacts proteins S4 and S8.

Functionally, with S4 and S12 plays an important role in translational accuracy. Located at the back of the 30S subunit body where it stabilizes the conformation of the head with respect to the body. The chain is Small ribosomal subunit protein uS5 from Neisseria gonorrhoeae (strain ATCC 700825 / FA 1090).